Here is a 179-residue protein sequence, read N- to C-terminus: Large ribosomal subunit protein uL5 (179 aa).

Belongs to the universal ribosomal protein uL5 family. As to quaternary structure, part of the 50S ribosomal subunit; part of the 5S rRNA/L5/L18/L25 subcomplex. Contacts the 5S rRNA and the P site tRNA. Forms a bridge to the 30S subunit in the 70S ribosome.

Functionally, this is one of the proteins that bind and probably mediate the attachment of the 5S RNA into the large ribosomal subunit, where it forms part of the central protuberance. In the 70S ribosome it contacts protein S13 of the 30S subunit (bridge B1b), connecting the 2 subunits; this bridge is implicated in subunit movement. Contacts the P site tRNA; the 5S rRNA and some of its associated proteins might help stabilize positioning of ribosome-bound tRNAs. The sequence is that of Large ribosomal subunit protein uL5 from Prochlorococcus marinus (strain MIT 9301).